Consider the following 784-residue polypeptide: Protein translocase subunit SecA 2 (784 aa).

Residues Q94, 112–116 (GEGKT), and D501 contribute to the ATP site.

Belongs to the SecA family. As to quaternary structure, monomer and homodimer. Part of the essential Sec protein translocation apparatus which comprises SecA, SecYEG and auxiliary proteins SecDF. Other proteins may also be involved.

It is found in the cell membrane. Its subcellular location is the cytoplasm. It catalyses the reaction ATP + H2O + cellular proteinSide 1 = ADP + phosphate + cellular proteinSide 2.. Part of the Sec protein translocase complex. Interacts with the SecYEG preprotein conducting channel. Has a central role in coupling the hydrolysis of ATP to the transfer of proteins into and across the cell membrane, serving as an ATP-driven molecular motor driving the stepwise translocation of polypeptide chains across the membrane. The polypeptide is Protein translocase subunit SecA 2 (Mycolicibacterium smegmatis (strain ATCC 700084 / mc(2)155) (Mycobacterium smegmatis)).